Here is a 74-residue protein sequence, read N- to C-terminus: U5-theraphotoxin-Cg1a (74 aa).

A signal peptide spans 1 to 19 (MNATIFALLLLLNLAMYNA). Positions 20–39 (AEQSSETDMDDTLLIPENYR) are excised as a propeptide. 3 disulfides stabilise this stretch: cysteine 42-cysteine 56, cysteine 49-cysteine 61, and cysteine 55-cysteine 71.

This sequence belongs to the neurotoxin 36 family. 01 subfamily. Expressed by the venom gland.

The protein localises to the secreted. In terms of biological role, probable ion channel inhibitor. This chain is U5-theraphotoxin-Cg1a, found in Chilobrachys guangxiensis (Chinese earth tiger tarantula).